A 489-amino-acid chain; its full sequence is Arginine biosynthesis bifunctional protein ArgJ 2, mitochondrial (489 aa).

Residues 1–11 (MLLISRIGARH) constitute a mitochondrion transit peptide. 5 residues coordinate substrate: threonine 205, lysine 234, threonine 245, glutamate 341, and asparagine 484. Threonine 245 functions as the Nucleophile in the catalytic mechanism.

This sequence belongs to the ArgJ family. In terms of assembly, heterodimer of an alpha and a beta chain. In terms of processing, the alpha and beta chains are autoproteolytically processed from a single precursor protein within the mitochondrion.

The protein resides in the mitochondrion matrix. It carries out the reaction N(2)-acetyl-L-ornithine + L-glutamate = N-acetyl-L-glutamate + L-ornithine. It catalyses the reaction L-glutamate + acetyl-CoA = N-acetyl-L-glutamate + CoA + H(+). The protein operates within amino-acid biosynthesis; L-arginine biosynthesis; L-ornithine and N-acetyl-L-glutamate from L-glutamate and N(2)-acetyl-L-ornithine (cyclic): step 1/1. It functions in the pathway amino-acid biosynthesis; L-arginine biosynthesis; N(2)-acetyl-L-ornithine from L-glutamate: step 1/4. In terms of biological role, catalyzes two activities which are involved in the cyclic version of arginine biosynthesis: the synthesis of acetylglutamate from glutamate and acetyl-CoA, and of ornithine by transacetylation between acetylornithine and glutamate. The protein is Arginine biosynthesis bifunctional protein ArgJ 2, mitochondrial of Sclerotinia sclerotiorum (strain ATCC 18683 / 1980 / Ss-1) (White mold).